Consider the following 72-residue polypeptide: Tetrahydromethanopterin S-methyltransferase subunit G (72 aa).

Residues 48–68 form a helical membrane-spanning segment; sequence IGILYGGFIGLLLFLIYTVVS.

The protein belongs to the MtrG family. In terms of assembly, the complex is composed of 8 subunits; MtrA, MtrB, MtrC, MtrD, MtrE, MtrF, MtrG and MtrH.

The protein resides in the cell membrane. It catalyses the reaction 5-methyl-5,6,7,8-tetrahydromethanopterin + coenzyme M + 2 Na(+)(in) = 5,6,7,8-tetrahydromethanopterin + methyl-coenzyme M + 2 Na(+)(out). The protein operates within one-carbon metabolism; methanogenesis from CO(2); methyl-coenzyme M from 5,10-methylene-5,6,7,8-tetrahydromethanopterin: step 2/2. Functionally, part of a complex that catalyzes the formation of methyl-coenzyme M and tetrahydromethanopterin from coenzyme M and methyl-tetrahydromethanopterin. This is an energy-conserving, sodium-ion translocating step. The sequence is that of Tetrahydromethanopterin S-methyltransferase subunit G from Methanosarcina barkeri (strain Fusaro / DSM 804).